We begin with the raw amino-acid sequence, 161 residues long: tRNA-acetylating toxin 1 (161 aa).

L92, V94, H99, G100, G102, G104, A105, L132, and E135 together coordinate acetyl-CoA. Residue Y140 is part of the active site. Acetyl-CoA is bound at residue H142.

This sequence belongs to the acetyltransferase family. GNAT subfamily. As to quaternary structure, homodimer (in absence of antitoxin). Forms a complex with cognate antitoxin TacA1. Forms a 4:2 antitoxin:toxin complex with cognate antitoxin TacA1.

It carries out the reaction glycyl-tRNA(Gly) + acetyl-CoA = N-acetylglycyl-tRNA(Gly) + CoA + H(+). Toxic component of a type II toxin-antitoxin (TA) system. Acetylates tRNA and inhibits translation, does not acetylate uncharged tRNA. Upon expression in situ acetylates only Gly-tRNA(Gly). In vitro acetylates mainly Gly and Ile/Leu. Upon induction of the toxin gene in lag phase in rich medium (but not mid-exponential phase) the lag phase is extended by several hours, locking bacteria in a non-growth state. Neutralized only by cognate antitoxin TacA1 (A8), but not by TacA2 or TacA3. Its toxic effect is neutralized by expression of peptidyl-tRNA hydrolase (pth) in lag phase. NAD-dependent protein deacylase (cobB) also play a role in detoxifying TacT targets. Expression increases persister cell formation, which is also abolished by either cognate antitoxin or Pth expression. Plays a role in persister cell formation. Functionally, the TacA1-TacT1 complex binds (and probably represses) its own promoter DNA but not that of tacA3-tacT3, it does not repress the tacA3-tacT3 promoter. The sequence is that of tRNA-acetylating toxin 1 from Salmonella typhimurium (strain 14028s / SGSC 2262).